The primary structure comprises 407 residues: S-adenosylmethionine synthase (407 aa).

Histidine 19 provides a ligand contact to ATP. Mg(2+) is bound at residue aspartate 21. Glutamate 47 is a binding site for K(+). 2 residues coordinate L-methionine: glutamate 60 and glutamine 103. The tract at residues 103 to 113 (QSQEIADGVDT) is flexible loop. The disordered stretch occupies residues 108–131 (ADGVDTSQEARGDGHFEEDDRAGA). Residues 178-180 (DGK), aspartate 258, 264-265 (RK), alanine 281, and lysine 285 contribute to the ATP site. Aspartate 258 contributes to the L-methionine binding site. Lysine 289 is a binding site for L-methionine.

It belongs to the AdoMet synthase family. In terms of assembly, homotetramer; dimer of dimers. Mg(2+) is required as a cofactor. Requires K(+) as cofactor.

It is found in the cytoplasm. It catalyses the reaction L-methionine + ATP + H2O = S-adenosyl-L-methionine + phosphate + diphosphate. Its pathway is amino-acid biosynthesis; S-adenosyl-L-methionine biosynthesis; S-adenosyl-L-methionine from L-methionine: step 1/1. In terms of biological role, catalyzes the formation of S-adenosylmethionine (AdoMet) from methionine and ATP. The overall synthetic reaction is composed of two sequential steps, AdoMet formation and the subsequent tripolyphosphate hydrolysis which occurs prior to release of AdoMet from the enzyme. The protein is S-adenosylmethionine synthase of Corynebacterium efficiens (strain DSM 44549 / YS-314 / AJ 12310 / JCM 11189 / NBRC 100395).